The following is a 525-amino-acid chain: Protein disulfide-isomerase A2 (525 aa).

Residues 1-21 form the signal peptide; the sequence is MSCQLLPVLLLLLLRASCPWG. The 126-residue stretch at 27–152 folds into the Thioredoxin 1 domain; sequence RSPSEEPPEE…IAEWLRRRVG (126 aa). Active-site nucleophile residues include Cys71 and Cys74. A disulfide bond links Cys71 and Cys74. Residues Asn127 and Asn284 are each glycosylated (N-linked (GlcNAc...) asparagine). A Thioredoxin 2 domain is found at 367 to 496; it reads VLNGQVKPYL…FSKFLDNGGV (130 aa). Catalysis depends on nucleophile residues Cys418 and Cys421. Cysteines 418 and 421 form a disulfide. The interval 498–525 is disordered; the sequence is PTEEPLEEPAAPFPEPPANSTMGSKEEL. Residue Asn516 is glycosylated (N-linked (GlcNAc...) asparagine). The segment covering 516–525 has biased composition (polar residues); it reads NSTMGSKEEL. A Prevents secretion from ER motif is present at residues 522-525; that stretch reads KEEL.

Belongs to the protein disulfide isomerase family. As to quaternary structure, monomer; predominantly as monomer under reducing conditions. Homodimer; disulfide-linked. Part of a large chaperone multiprotein complex comprising DNAJB11, HSP90B1, HSPA5, HYOU, PDIA2, PDIA4, PDIA6, PPIB, SDF2L1, UGGT1 and very small amounts of ERP29, but not, or at very low levels, CALR nor CANX. Post-translationally, the disulfide-linked homodimer exhibits an enhanced chaperone activity. Glycosylated.

It is found in the endoplasmic reticulum lumen. It catalyses the reaction Catalyzes the rearrangement of -S-S- bonds in proteins.. Functionally, acts as an intracellular estrogen-binding protein. May be involved in modulating cellular levels and biological functions of estrogens in the pancreas. May act as a chaperone that inhibits aggregation of misfolded proteins. In Pongo abelii (Sumatran orangutan), this protein is Protein disulfide-isomerase A2 (PDIA2).